The primary structure comprises 501 residues: ATP synthase subunit alpha (501 aa).

Residue 169 to 176 (GDRQTGKT) participates in ATP binding.

This sequence belongs to the ATPase alpha/beta chains family. F-type ATPases have 2 components, CF(1) - the catalytic core - and CF(0) - the membrane proton channel. CF(1) has five subunits: alpha(3), beta(3), gamma(1), delta(1), epsilon(1). CF(0) has three main subunits: a(1), b(2) and c(9-12). The alpha and beta chains form an alternating ring which encloses part of the gamma chain. CF(1) is attached to CF(0) by a central stalk formed by the gamma and epsilon chains, while a peripheral stalk is formed by the delta and b chains.

The protein resides in the cell membrane. The catalysed reaction is ATP + H2O + 4 H(+)(in) = ADP + phosphate + 5 H(+)(out). In terms of biological role, produces ATP from ADP in the presence of a proton gradient across the membrane. The alpha chain is a regulatory subunit. The sequence is that of ATP synthase subunit alpha from Streptococcus agalactiae serotype III (strain NEM316).